A 69-amino-acid chain; its full sequence is Neuropeptide-like protein 30 (69 aa).

The first 22 residues, 1 to 22, serve as a signal peptide directing secretion; it reads MISTSSILILVVLLACFMAASA. A tyrosine amide mark is found at tyrosine 29, tyrosine 39, tyrosine 46, and tyrosine 53. A tryptophan amide mark is found at tryptophan 58 and tryptophan 67.

It belongs to the YARP (YGGW-amide related peptide) family. Expressed in hypoderm.

It is found in the secreted. Functionally, may have antimicrobial activity. May play a role in response to fungal infection. The sequence is that of Neuropeptide-like protein 30 (nlp-30) from Caenorhabditis elegans.